The following is a 359-amino-acid chain: Type-1 angiotensin II receptor (359 aa).

The Extracellular segment spans residues 1–25; the sequence is MVPNYSTEETVKRIHVDCPVSGRHS. N4 carries N-linked (GlcNAc...) asparagine glycosylation. An angiotensin II-binding site is contributed by D17. Cystine bridges form between C18-C274 and C101-C180. A helical membrane pass occupies residues 26-55; the sequence is YIYIMVPTVYSIIFIIGIFGNSLVVIVIYC. At 56 to 61 the chain is on the cytoplasmic side; sequence YMKLKT. The chain crosses the membrane as a helical span at residues 62–89; the sequence is VASIFLLNLALADLCFLITLPLWAAYTA. Topologically, residues 90–98 are extracellular; the sequence is MEYQWPFGN. The chain crosses the membrane as a helical span at residues 99–125; that stretch reads CLCKLASAGISFNLYASVFLLTCLSID. Residues 126–141 lie on the Cytoplasmic side of the membrane; it reads RYLAIVHPVKSRIRRT. The chain crosses the membrane as a helical span at residues 142–165; sequence MFVARVTCIVIWLLAGVASLPVII. Residues 166–190 lie on the Extracellular side of the membrane; that stretch reads HRNIFFAENLNMTVCGFRYDNNNTT. Angiotensin II is bound at residue R167. Residue N176 is glycosylated (N-linked (GlcNAc...) asparagine). Residues F182 and Y184 each contribute to the angiotensin II site. N-linked (GlcNAc...) asparagine glycans are attached at residues N187 and N188. A helical membrane pass occupies residues 191-216; the sequence is LRVGLGLSKNLLGFLIPFLIILTSYT. K199 serves as a coordination point for angiotensin II. Over 217 to 239 the chain is Cytoplasmic; sequence LIWKTLKKAYQIQRNKTRNDDIF. The helical transmembrane segment at 240–268 threads the bilayer; that stretch reads KMIVAIVFFFFFSWIPHQVFTFLDVLIQL. Topologically, residues 269–278 are extracellular; it reads HVITDCKITD. Residues 279–304 form a helical membrane-spanning segment; that stretch reads IVDTAMPFTICIAYFNNCLNPFFYVF. At 305-359 the chain is on the cytoplasmic side; sequence FGKNFKKYFLQLIKYIPPNVSTHPSLTTKMSSLSYRPPENIRLPTKKTAGSFDTE.

Belongs to the G-protein coupled receptor 1 family. In terms of processing, C-terminal Ser or Thr residues may be phosphorylated. Adrenal medulla.

The protein resides in the cell membrane. Its function is as follows. Receptor for angiotensin II, a vasoconstricting peptide, which acts as a key regulator of blood pressure and sodium retention by the kidney. The activated receptor in turn couples to G-alpha proteins G(q) (GNAQ, GNA11, GNA14 or GNA15) and thus activates phospholipase C and increases the cytosolic Ca(2+) concentrations, which in turn triggers cellular responses such as stimulation of protein kinase C. This Meleagris gallopavo (Wild turkey) protein is Type-1 angiotensin II receptor (AGTR1).